Reading from the N-terminus, the 591-residue chain is MKRSSSVSVEDEKSARRKLDVVPKLHFVGCSHLTDYHLMEKLGEGTFGEVYKSQRRKDGKVYALKRILMHTEKEGFPITAIREIKILKSIKHENIIPLSDMTVVRADKKHRRRGSIYMVTPYMDHDLSGLLENPSVKFTEPQIKCYMKQLFAGTKYLHDQLILHRDLKAANLLIDNHGILKIADFGLARVITEESYANKNPGLPPPNRREYTGCVVTRWYRSPELLLGERRYTTAIDMWSVGCIMAEMYKGRPILQGSSDLDQLDKIFRLCGSPTQATMPNWEKLPGCEGVRSFPSHPRTLETAFFTFGKEMTSLCGAILTLNPDERLSASMALEHEYFTTPPYPANPSELQSYSASHEYDKRRKREQRDANSHAFEQTANGKRQFRFMTRGPSDPWYGIRRPNYNSQPQYQRGSYNREGGNMDRSRNVNYQPKRQQNFKPLTSDLPQKNSEFSETNAMNQTSNHSHADGQRYYRPEQDRSQRLRNPSDYGRQGRQSSQSQQPAWNVSSRYQNNSKVQTTSRASENADTNKTQHNIKYIDSYVPEYSIARQSANQKTNEQHPSSTSLHQQSTSDLKSPSFHENSNVDDTPK.

Residues 1–385 form an interaction with pch1 region; it reads MKRSSSVSVE…FEQTANGKRQ (385 aa). The region spanning 36 to 339 is the Protein kinase domain; it reads YHLMEKLGEG…ASMALEHEYF (304 aa). Residues 42 to 50 and Lys-65 contribute to the ATP site; that span reads LGEGTFGEV. The active-site Proton acceptor is Asp-166. A Phosphotyrosine modification is found at Tyr-211. A Phosphothreonine modification is found at Thr-212. 2 disordered regions span residues 341-534 and 549-591; these read TPPY…KTQH and ARQS…DTPK. Over residues 358–372 the composition is skewed to basic and acidic residues; that stretch reads HEYDKRRKREQRDAN. Polar residues-rich tracts occupy residues 404–415 and 428–465; these read NYNSQPQYQRGS and NVNYQPKRQQNFKPLTSDLPQKNSEFSETNAMNQTSNH. The interval 442–523 is binds to pct1; sequence LTSDLPQKNS…NSKVQTTSRA (82 aa). The span at 466–482 shows a compositional bias: basic and acidic residues; it reads SHADGQRYYRPEQDRSQ. The span at 491–502 shows a compositional bias: low complexity; it reads GRQGRQSSQSQQ. A compositionally biased stretch (polar residues) spans 503-534; sequence PAWNVSSRYQNNSKVQTTSRASENADTNKTQH. At Thr-565 the chain carries Phosphothreonine. At Ser-577 the chain carries Phosphoserine.

Belongs to the protein kinase superfamily. CMGC Ser/Thr protein kinase family. CDC2/CDKX subfamily. Interacts with pch1 cyclin via its N-terminal domain. Via its C-terminal domain, interacts with RNA triphosphatase pct1 which is involved in mRNA capping. Also interacts with pcm1.

Its subcellular location is the nucleus. It carries out the reaction L-seryl-[protein] + ATP = O-phospho-L-seryl-[protein] + ADP + H(+). It catalyses the reaction L-threonyl-[protein] + ATP = O-phospho-L-threonyl-[protein] + ADP + H(+). The enzyme catalyses [DNA-directed RNA polymerase] + ATP = phospho-[DNA-directed RNA polymerase] + ADP + H(+). Its activity is regulated as follows. May be activated by autophosphorylation or phosphorylation by a separate activating kinase. In terms of biological role, component of the positive transcription elongation factor b (P-TEFb) which consists of cdk9 and pch1, and which phosphorylates the C-terminal domain (CTD) of RNA polymerase II and spt5. In Schizosaccharomyces pombe (strain 972 / ATCC 24843) (Fission yeast), this protein is Probable cyclin-dependent kinase 9 (cdk9).